The primary structure comprises 209 residues: Large ribosomal subunit protein uL4 (209 aa).

Residues 45 to 77 are disordered; the sequence is RQGTHKAKERAEVTGSTRKIKKQKGTGTARAGS.

It belongs to the universal ribosomal protein uL4 family. As to quaternary structure, part of the 50S ribosomal subunit.

One of the primary rRNA binding proteins, this protein initially binds near the 5'-end of the 23S rRNA. It is important during the early stages of 50S assembly. It makes multiple contacts with different domains of the 23S rRNA in the assembled 50S subunit and ribosome. Its function is as follows. Forms part of the polypeptide exit tunnel. The polypeptide is Large ribosomal subunit protein uL4 (Flavobacterium johnsoniae (strain ATCC 17061 / DSM 2064 / JCM 8514 / BCRC 14874 / CCUG 350202 / NBRC 14942 / NCIMB 11054 / UW101) (Cytophaga johnsonae)).